The primary structure comprises 875 residues: Valine--tRNA ligase (875 aa).

The 'HIGH' region signature appears at 45 to 55 (PNVTGVLHMGH). Residues 524–528 (KMSKS) carry the 'KMSKS' region motif. Lysine 527 lines the ATP pocket. Residues 803 to 837 (VKLLIDKTKELIRLEKQLEKYKMLKISVSKKLENE) are a coiled coil.

The protein belongs to the class-I aminoacyl-tRNA synthetase family. ValS type 1 subfamily. In terms of assembly, monomer.

It localises to the cytoplasm. The enzyme catalyses tRNA(Val) + L-valine + ATP = L-valyl-tRNA(Val) + AMP + diphosphate. Functionally, catalyzes the attachment of valine to tRNA(Val). As ValRS can inadvertently accommodate and process structurally similar amino acids such as threonine, to avoid such errors, it has a 'posttransfer' editing activity that hydrolyzes mischarged Thr-tRNA(Val) in a tRNA-dependent manner. The sequence is that of Valine--tRNA ligase from Borrelia garinii subsp. bavariensis (strain ATCC BAA-2496 / DSM 23469 / PBi) (Borreliella bavariensis).